Reading from the N-terminus, the 470-residue chain is 3-isopropylmalate dehydratase large subunit (470 aa).

The [4Fe-4S] cluster site is built by C349, C409, and C412.

The protein belongs to the aconitase/IPM isomerase family. LeuC type 1 subfamily. As to quaternary structure, heterodimer of LeuC and LeuD. [4Fe-4S] cluster serves as cofactor.

The catalysed reaction is (2R,3S)-3-isopropylmalate = (2S)-2-isopropylmalate. It functions in the pathway amino-acid biosynthesis; L-leucine biosynthesis; L-leucine from 3-methyl-2-oxobutanoate: step 2/4. Catalyzes the isomerization between 2-isopropylmalate and 3-isopropylmalate, via the formation of 2-isopropylmaleate. The chain is 3-isopropylmalate dehydratase large subunit from Koribacter versatilis (strain Ellin345).